Reading from the N-terminus, the 326-residue chain is Ras association domain-containing protein 2 (326 aa).

The tract at residues 111-133 (EVDAPPEGDQMPSSTDSRGLKPL) is disordered. The 89-residue stretch at 176–264 (YNHKTSVFTP…SKVFLMEKDQ (89 aa)) folds into the Ras-associating domain. The SARAH domain maps to 272–319 (VAQYIKFEMPVLKSFIQKLQEEEDREVKKLMRKYTVLRLMIRQRLEEI).

In terms of assembly, interacts directly with activated KRAS in a GTP-dependent manner. Interacts (via SARAH domain) with STK3/MST2 and STK4/MST1. In terms of processing, phosphorylated by STK3/MST2 and STK4/MST1. In terms of tissue distribution, widely expressed with highest levels in brain, placenta, peripheral blood and lung. Frequently down-regulated in lung tumor cell lines.

It localises to the nucleus. It is found in the cytoplasm. The protein localises to the chromosome. The protein resides in the centromere. Its subcellular location is the kinetochore. Functionally, potential tumor suppressor. Acts as a KRAS-specific effector protein. May promote apoptosis and cell cycle arrest. Stabilizes STK3/MST2 by protecting it from proteasomal degradation. This is Ras association domain-containing protein 2 (RASSF2) from Homo sapiens (Human).